Reading from the N-terminus, the 461-residue chain is Photosystem II CP43 reaction center protein (461 aa).

A propeptide spanning residues 1–2 (ME) is cleaved from the precursor. Thr-3 is subject to N-acetylthreonine. A Phosphothreonine modification is found at Thr-3. Transmembrane regions (helical) follow at residues 57-81 (LFEVAHFVPEKPMYEQGLILLPHLA), 122-143 (LIGPETLEESFPFFGYVWKDKN), 166-188 (KAMYFGGVYDTWAPGGGDVRIIT), 243-263 (TPWPWARRAFVWSGEAYLSYS), and 279-300 (WFNNTAYPSEFYGPTGPEASQS). Residue Glu-355 participates in [CaMn4O5] cluster binding. The chain crosses the membrane as a helical span at residues 435–459 (RARAAAAGFEKGIDRLDEPVLSMRP).

It belongs to the PsbB/PsbC family. PsbC subfamily. PSII is composed of 1 copy each of membrane proteins PsbA, PsbB, PsbC, PsbD, PsbE, PsbF, PsbH, PsbI, PsbJ, PsbK, PsbL, PsbM, PsbT, PsbX, PsbY, PsbZ, Psb30/Ycf12, at least 3 peripheral proteins of the oxygen-evolving complex and a large number of cofactors. It forms dimeric complexes. It depends on Binds multiple chlorophylls and provides some of the ligands for the Ca-4Mn-5O cluster of the oxygen-evolving complex. It may also provide a ligand for a Cl- that is required for oxygen evolution. PSII binds additional chlorophylls, carotenoids and specific lipids. as a cofactor.

It is found in the plastid. It localises to the chloroplast thylakoid membrane. Its function is as follows. One of the components of the core complex of photosystem II (PSII). It binds chlorophyll and helps catalyze the primary light-induced photochemical processes of PSII. PSII is a light-driven water:plastoquinone oxidoreductase, using light energy to abstract electrons from H(2)O, generating O(2) and a proton gradient subsequently used for ATP formation. This Tetradesmus obliquus (Green alga) protein is Photosystem II CP43 reaction center protein.